The sequence spans 87 residues: Small ribosomal subunit protein uS17 (87 aa).

It belongs to the universal ribosomal protein uS17 family. Part of the 30S ribosomal subunit.

One of the primary rRNA binding proteins, it binds specifically to the 5'-end of 16S ribosomal RNA. The protein is Small ribosomal subunit protein uS17 of Geobacillus kaustophilus (strain HTA426).